A 182-amino-acid polypeptide reads, in one-letter code: Testis-expressed protein 29 (182 aa).

Over 1-56 the chain is Extracellular; sequence MRYTTDIKKSPPQLLKTFAVCDISLYDICDYNVTRDQCKELGCCFYKGVCYKKVVP. A helical membrane pass occupies residues 57–77; sequence IYVQMFSTLIVLVTGIIIITI. The Cytoplasmic segment spans residues 78 to 182; sequence IYRIVQEIKR…PPTDPSENPP (105 aa). The interval 91–182 is disordered; it reads LSMNSTPKAS…PPTDPSENPP (92 aa). The segment covering 115–170 has biased composition (low complexity); the sequence is RAPSRSPSRTSSTLSSRSPTTAPTTAPTTDPATDPATDPATDPATDPATDPATDPA. The segment covering 171–182 has biased composition (pro residues); the sequence is TAPPTDPSENPP.

The protein localises to the membrane. This is Testis-expressed protein 29 (Tex29) from Rattus norvegicus (Rat).